We begin with the raw amino-acid sequence, 208 residues long: GTP cyclohydrolase 1 (208 aa).

Zn(2+) contacts are provided by C89, H92, and C163.

This sequence belongs to the GTP cyclohydrolase I family. In terms of assembly, homomer.

It catalyses the reaction GTP + H2O = 7,8-dihydroneopterin 3'-triphosphate + formate + H(+). It functions in the pathway cofactor biosynthesis; 7,8-dihydroneopterin triphosphate biosynthesis; 7,8-dihydroneopterin triphosphate from GTP: step 1/1. This is GTP cyclohydrolase 1 from Saccharolobus islandicus (strain L.S.2.15 / Lassen #1) (Sulfolobus islandicus).